A 339-amino-acid polypeptide reads, in one-letter code: Ketol-acid reductoisomerase (NADP(+)) (339 aa).

The region spanning 1 to 182 (MRVYYDRDAD…GGGRAGIIET (182 aa)) is the KARI N-terminal Rossmann domain. Residues 24–27 (YGSQ), R48, S51, S53, and 83–86 (DELQ) each bind NADP(+). Residue H108 is part of the active site. NADP(+) is bound at residue G134. Positions 183–328 (TFREECETDL…AKLRDMMPWI (146 aa)) constitute a KARI C-terminal knotted domain. Mg(2+)-binding residues include D191, E195, E227, and E231. Residue S252 coordinates substrate.

It belongs to the ketol-acid reductoisomerase family. Mg(2+) serves as cofactor.

The enzyme catalyses (2R)-2,3-dihydroxy-3-methylbutanoate + NADP(+) = (2S)-2-acetolactate + NADPH + H(+). It carries out the reaction (2R,3R)-2,3-dihydroxy-3-methylpentanoate + NADP(+) = (S)-2-ethyl-2-hydroxy-3-oxobutanoate + NADPH + H(+). Its pathway is amino-acid biosynthesis; L-isoleucine biosynthesis; L-isoleucine from 2-oxobutanoate: step 2/4. It functions in the pathway amino-acid biosynthesis; L-valine biosynthesis; L-valine from pyruvate: step 2/4. Involved in the biosynthesis of branched-chain amino acids (BCAA). Catalyzes an alkyl-migration followed by a ketol-acid reduction of (S)-2-acetolactate (S2AL) to yield (R)-2,3-dihydroxy-isovalerate. In the isomerase reaction, S2AL is rearranged via a Mg-dependent methyl migration to produce 3-hydroxy-3-methyl-2-ketobutyrate (HMKB). In the reductase reaction, this 2-ketoacid undergoes a metal-dependent reduction by NADPH to yield (R)-2,3-dihydroxy-isovalerate. The sequence is that of Ketol-acid reductoisomerase (NADP(+)) from Rhodopseudomonas palustris (strain ATCC BAA-98 / CGA009).